The primary structure comprises 383 residues: Dual-specificity RNA methyltransferase RlmN (383 aa).

The active-site Proton acceptor is E93. The 241-residue stretch at 99-339 folds into the Radical SAM core domain; sequence EETRGTLCVS…TTIRKTRGDD (241 aa). A disulfide bridge links C106 with C344. The [4Fe-4S] cluster site is built by C113, C117, and C120. Residues 170-171, S202, 224-226, and N301 contribute to the S-adenosyl-L-methionine site; these read GE and SLH. C344 serves as the catalytic S-methylcysteine intermediate.

This sequence belongs to the radical SAM superfamily. RlmN family. [4Fe-4S] cluster serves as cofactor.

Its subcellular location is the cytoplasm. It catalyses the reaction adenosine(2503) in 23S rRNA + 2 reduced [2Fe-2S]-[ferredoxin] + 2 S-adenosyl-L-methionine = 2-methyladenosine(2503) in 23S rRNA + 5'-deoxyadenosine + L-methionine + 2 oxidized [2Fe-2S]-[ferredoxin] + S-adenosyl-L-homocysteine. The catalysed reaction is adenosine(37) in tRNA + 2 reduced [2Fe-2S]-[ferredoxin] + 2 S-adenosyl-L-methionine = 2-methyladenosine(37) in tRNA + 5'-deoxyadenosine + L-methionine + 2 oxidized [2Fe-2S]-[ferredoxin] + S-adenosyl-L-homocysteine. Its function is as follows. Specifically methylates position 2 of adenine 2503 in 23S rRNA and position 2 of adenine 37 in tRNAs. m2A2503 modification seems to play a crucial role in the proofreading step occurring at the peptidyl transferase center and thus would serve to optimize ribosomal fidelity. In Ralstonia pickettii (strain 12J), this protein is Dual-specificity RNA methyltransferase RlmN.